Reading from the N-terminus, the 142-residue chain is Large ribosomal subunit protein uL13 (142 aa).

It belongs to the universal ribosomal protein uL13 family. In terms of assembly, part of the 50S ribosomal subunit.

In terms of biological role, this protein is one of the early assembly proteins of the 50S ribosomal subunit, although it is not seen to bind rRNA by itself. It is important during the early stages of 50S assembly. The chain is Large ribosomal subunit protein uL13 from Laribacter hongkongensis (strain HLHK9).